The sequence spans 355 residues: tRNA-specific 2-thiouridylase MnmA (355 aa).

ATP-binding positions include 6 to 13 (LLSGGVDS) and leucine 33. The active-site Nucleophile is the cysteine 100. A disulfide bridge connects residues cysteine 100 and cysteine 195. ATP is bound at residue glycine 123. The interval 145 to 147 (KDQ) is interaction with tRNA. Cysteine 195 serves as the catalytic Cysteine persulfide intermediate.

It belongs to the MnmA/TRMU family.

Its subcellular location is the cytoplasm. The catalysed reaction is S-sulfanyl-L-cysteinyl-[protein] + uridine(34) in tRNA + AH2 + ATP = 2-thiouridine(34) in tRNA + L-cysteinyl-[protein] + A + AMP + diphosphate + H(+). In terms of biological role, catalyzes the 2-thiolation of uridine at the wobble position (U34) of tRNA, leading to the formation of s(2)U34. In Borrelia garinii subsp. bavariensis (strain ATCC BAA-2496 / DSM 23469 / PBi) (Borreliella bavariensis), this protein is tRNA-specific 2-thiouridylase MnmA.